A 111-amino-acid polypeptide reads, in one-letter code: UPF0145 protein BMA10229_A0446 (111 aa).

It belongs to the UPF0145 family.

This chain is UPF0145 protein BMA10229_A0446, found in Burkholderia mallei (strain NCTC 10229).